Here is a 158-residue protein sequence, read N- to C-terminus: E3 ubiquitin ligase complex SCF subunit sconC (158 aa).

The interval 100 to 158 (ILAANYLDIKALLDVGCKTVANMIKGKSPEEIRKTFNIQNDFTPEEEDQIRRENEWAEE) is interaction with the F-box domain of F-box proteins.

The protein belongs to the SKP1 family. Component of the SCF (SKP1-CUL1-F-box protein) E3 ubiquitin ligase complexes.

It participates in protein modification; protein ubiquitination. Its function is as follows. Essential component of the SCF (SKP1-CUL1-F-box protein) E3 ubiquitin ligase complexes, which mediate the ubiquitination and subsequent proteasomal degradation of target proteins. Controls sulfur metabolite repression, probably by mediating the inactivation or degradation of the metR transcription factor. The protein is E3 ubiquitin ligase complex SCF subunit sconC (sconC) of Aspergillus fumigatus (strain CBS 144.89 / FGSC A1163 / CEA10) (Neosartorya fumigata).